The chain runs to 433 residues: Tol-Pal system protein TolB (433 aa).

The N-terminal stretch at 1–21 (MINLFRGLLVVLCFASAMVAA) is a signal peptide.

Belongs to the TolB family. As to quaternary structure, the Tol-Pal system is composed of five core proteins: the inner membrane proteins TolA, TolQ and TolR, the periplasmic protein TolB and the outer membrane protein Pal. They form a network linking the inner and outer membranes and the peptidoglycan layer.

The protein resides in the periplasm. Part of the Tol-Pal system, which plays a role in outer membrane invagination during cell division and is important for maintaining outer membrane integrity. The polypeptide is Tol-Pal system protein TolB (Pseudomonas syringae pv. tomato (strain ATCC BAA-871 / DC3000)).